The primary structure comprises 652 residues: Acetyl-coenzyme A synthetase (652 aa).

Residues Arg-189–Lys-192 and Ser-311 contribute to the CoA site. Residues Gly-387–Pro-389, Asp-411–Thr-416, Asp-500, and Arg-515 contribute to the ATP site. Ser-523 lines the CoA pocket. Arg-526 provides a ligand contact to ATP. Residues Val-537, His-539, and Ile-542 each coordinate Mg(2+). Lys-584 is a binding site for CoA. An N6-acetyllysine modification is found at Lys-609.

It belongs to the ATP-dependent AMP-binding enzyme family. It depends on Mg(2+) as a cofactor. Acetylated. Deacetylation by the SIR2-homolog deacetylase activates the enzyme.

It catalyses the reaction acetate + ATP + CoA = acetyl-CoA + AMP + diphosphate. Its function is as follows. Catalyzes the conversion of acetate into acetyl-CoA (AcCoA), an essential intermediate at the junction of anabolic and catabolic pathways. AcsA undergoes a two-step reaction. In the first half reaction, AcsA combines acetate with ATP to form acetyl-adenylate (AcAMP) intermediate. In the second half reaction, it can then transfer the acetyl group from AcAMP to the sulfhydryl group of CoA, forming the product AcCoA. This Bartonella quintana (strain Toulouse) (Rochalimaea quintana) protein is Acetyl-coenzyme A synthetase.